Here is a 535-residue protein sequence, read N- to C-terminus: Succinate-semialdehyde dehydrogenase, mitochondrial (535 aa).

The N-terminal 47 residues, 1–47 (MATCIWLRSCGARRLGWTFPGCRLRPRAGGLVPASGPAPGPAQLRCY), are a transit peptide targeting the mitochondrion. The residue at position 126 (Lys-126) is an N6-acetyllysine; alternate. Lys-126 is modified (N6-succinyllysine; alternate). N6-succinyllysine occurs at positions 135 and 184. NAD(+) contacts are provided by residues Arg-213 and 228–231 (KPAE). Arg-213 is a binding site for substrate. Lys-265 is subject to N6-acetyllysine; alternate. An N6-succinyllysine; alternate modification is found at Lys-265. 284–289 (GSTTTG) provides a ligand contact to NAD(+). The active-site Proton acceptor is Glu-306. Arg-334 is a binding site for substrate. The Nucleophile role is filled by Cys-340. Cys-340 and Cys-342 are disulfide-bonded. Lys-365 carries the post-translational modification N6-acetyllysine. Lys-402 bears the N6-succinyllysine mark. N6-acetyllysine is present on Lys-411. Ser-498 contacts substrate. At Ser-499 the chain carries Phosphoserine.

It belongs to the aldehyde dehydrogenase family. As to quaternary structure, homotetramer.

The protein resides in the mitochondrion. It carries out the reaction succinate semialdehyde + NAD(+) + H2O = succinate + NADH + 2 H(+). The protein operates within amino-acid degradation; 4-aminobutanoate degradation. Its activity is regulated as follows. Redox-regulated. Inhibited under oxydizing conditions. In terms of biological role, catalyzes one step in the degradation of the inhibitory neurotransmitter gamma-aminobutyric acid (GABA). This Pan paniscus (Pygmy chimpanzee) protein is Succinate-semialdehyde dehydrogenase, mitochondrial (ALDH5A1).